A 191-amino-acid chain; its full sequence is Peptidyl-tRNA hydrolase (191 aa).

Tyrosine 16 is a tRNA binding site. Histidine 21 acts as the Proton acceptor in catalysis. TRNA-binding residues include phenylalanine 66, asparagine 68, and asparagine 114.

Belongs to the PTH family. As to quaternary structure, monomer.

The protein localises to the cytoplasm. It catalyses the reaction an N-acyl-L-alpha-aminoacyl-tRNA + H2O = an N-acyl-L-amino acid + a tRNA + H(+). Hydrolyzes ribosome-free peptidyl-tRNAs (with 1 or more amino acids incorporated), which drop off the ribosome during protein synthesis, or as a result of ribosome stalling. Functionally, catalyzes the release of premature peptidyl moieties from peptidyl-tRNA molecules trapped in stalled 50S ribosomal subunits, and thus maintains levels of free tRNAs and 50S ribosomes. This chain is Peptidyl-tRNA hydrolase, found in Geotalea uraniireducens (strain Rf4) (Geobacter uraniireducens).